The sequence spans 162 residues: Transcription elongation factor GreB (162 aa).

Positions 52–76 (GKRRLREIDRRIRFLSKRLEALQII) form a coiled coil.

It belongs to the GreA/GreB family. GreB subfamily.

In terms of biological role, necessary for efficient RNA polymerase transcription elongation past template-encoded arresting sites. The arresting sites in DNA have the property of trapping a certain fraction of elongating RNA polymerases that pass through, resulting in locked ternary complexes. Cleavage of the nascent transcript by cleavage factors such as GreA or GreB allows the resumption of elongation from the new 3'terminus. GreB releases sequences of up to 9 nucleotides in length. The polypeptide is Transcription elongation factor GreB (Haemophilus ducreyi (strain 35000HP / ATCC 700724)).